Reading from the N-terminus, the 112-residue chain is UPF0342 protein SSU05_1260 (112 aa).

It belongs to the UPF0342 family.

The polypeptide is UPF0342 protein SSU05_1260 (Streptococcus suis (strain 05ZYH33)).